A 509-amino-acid chain; its full sequence is Cytochrome P450 monooxygenase CYP512U6 (509 aa).

The helical transmembrane segment at 12-29 (VFACVAVVIAIYAVRWYT) threads the bilayer. C446 is a heme binding site.

Belongs to the cytochrome P450 family. Heme serves as cofactor.

Its subcellular location is the membrane. It carries out the reaction ganoderate DM + reduced [NADPH--hemoprotein reductase] + O2 = hainanate A + oxidized [NADPH--hemoprotein reductase] + H2O + H(+). It catalyses the reaction ganoderate TR + reduced [NADPH--hemoprotein reductase] + O2 = ganoderate Jc + oxidized [NADPH--hemoprotein reductase] + H2O + H(+). The protein operates within secondary metabolite biosynthesis; terpenoid biosynthesis. Its function is as follows. Cytochrome P450 monooxygenase that hydroxylates the ganoderic acids DM and TR at the C-23 position to produce hainanic acid A and ganoderic acid Jc, respectively. The chain is Cytochrome P450 monooxygenase CYP512U6 from Ganoderma lucidum (Ling zhi medicinal fungus).